Consider the following 721-residue polypeptide: Mitogen-activated protein kinase 6 (721 aa).

The region spanning 20-316 (YMDLKPLGCG…AEEALSHPYM (297 aa)) is the Protein kinase domain. ATP contacts are provided by residues 26–34 (LGCGGNGLV) and K49. D152 serves as the catalytic Proton acceptor. Phosphothreonine is present on T626. The TXY motif lies at 626-628 (TSY). Y628 is subject to Phosphotyrosine.

It belongs to the protein kinase superfamily. CMGC Ser/Thr protein kinase family. MAP kinase subfamily. Mg(2+) serves as cofactor. In terms of processing, dually phosphorylated on Thr-626 and Tyr-628, which activates the enzyme.

The enzyme catalyses L-seryl-[protein] + ATP = O-phospho-L-seryl-[protein] + ADP + H(+). The catalysed reaction is L-threonyl-[protein] + ATP = O-phospho-L-threonyl-[protein] + ADP + H(+). With respect to regulation, activated by threonine and tyrosine phosphorylation. Its function is as follows. Phosphorylates microtubule-associated protein 2 (MAP2). May promote entry in the cell cycle. The protein is Mitogen-activated protein kinase 6 (MAPK6) of Gallus gallus (Chicken).